Reading from the N-terminus, the 465-residue chain is Pancreatic triacylglycerol lipase (465 aa).

The signal sequence occupies residues methionine 1–glycine 16. Intrachain disulfides connect cysteine 20–cysteine 26 and cysteine 107–cysteine 118. Catalysis depends on serine 169, which acts as the Nucleophile. The active-site Charge relay system is aspartate 193. 4 residues coordinate Ca(2+): glutamate 204, arginine 207, aspartate 209, and aspartate 212. Cysteine 254 and cysteine 278 are oxidised to a cystine. Histidine 280 acts as the Charge relay system in catalysis. 2 cysteine pairs are disulfide-bonded: cysteine 302–cysteine 313 and cysteine 316–cysteine 321. 3 N-linked (GlcNAc...) asparagine glycosylation sites follow: asparagine 351, asparagine 398, and asparagine 425. The PLAT domain maps to tryptophan 355–cysteine 465. Cysteine 449 and cysteine 465 are oxidised to a cystine.

This sequence belongs to the AB hydrolase superfamily. Lipase family. In terms of assembly, forms a 1:1 stoichiometric complex with (pro)colipase/CLPS.

It is found in the secreted. It catalyses the reaction a triacylglycerol + H2O = a diacylglycerol + a fatty acid + H(+). The catalysed reaction is 1,2,3-tributanoylglycerol + H2O = dibutanoylglycerol + butanoate + H(+). It carries out the reaction 1,2,3-tri-(9Z-octadecenoyl)-glycerol + H2O = di-(9Z)-octadecenoylglycerol + (9Z)-octadecenoate + H(+). The enzyme catalyses all-trans-retinyl hexadecanoate + H2O = all-trans-retinol + hexadecanoate + H(+). It catalyses the reaction 1,2-di-(9Z-octadecenoyl)-glycerol + H2O = (9Z-octadecenoyl)-glycerol + (9Z)-octadecenoate + H(+). Its activity is regulated as follows. Inhibited by bile salts, is reactivated by (pro)colipase/CLPS. Its function is as follows. Plays an important role in fat metabolism. It preferentially splits the esters of long-chain fatty acids at positions 1 and 3, producing mainly 2-monoacylglycerol and free fatty acids, and shows considerably higher activity against insoluble emulsified substrates than against soluble ones. The protein is Pancreatic triacylglycerol lipase (PNLIP) of Cavia porcellus (Guinea pig).